We begin with the raw amino-acid sequence, 491 residues long: D-xylose-proton symporter (491 aa).

Over 1-9 (MNTQYNSSY) the chain is Cytoplasmic. Residues 10 to 30 (IFSITLVATLGGLLFGYDTAV) traverse the membrane as a helical segment. Residues 31-55 (ISGTVESLNTVFVAPQNLSESAANS) are Periplasmic-facing. A helical membrane pass occupies residues 56–76 (LLGFCVASALIGCIIGGALGG). At 77–89 (YCSNRFGRRDSLK) the chain is on the cytoplasmic side. The chain crosses the membrane as a helical span at residues 90 to 110 (IAAVLFFISGVGSAWPELGFT). Residues 111 to 133 (SINPDNTVPVYLAGYVPEFVIYR) are Periplasmic-facing. A helical transmembrane segment spans residues 134–154 (IIGGIGVGLASMLSPMYIAEL). The Cytoplasmic portion of the chain corresponds to 155–165 (APAHIRGKLVS). Residues 166–186 (FNQFAIIFGQLLVYCVNYFIA) traverse the membrane as a helical segment. Residue Gln-168 participates in beta-D-xylose binding. The Periplasmic portion of the chain corresponds to 187-200 (RSGDASWLNTDGWR). A helical membrane pass occupies residues 201 to 221 (YMFASECIPALLFLMLLYTVP). Residues 222–272 (ESPRWLMSRGKQEQAEGILRKIMGNTLATQAVQEIKHSLDHGRKTGGRLLM) are Cytoplasmic-facing. A helical membrane pass occupies residues 273–293 (FGVGVIVIGVMLSIFQQFVGI). Residues 288–289 (QQ) and Asn-294 each bind beta-D-xylose. Topologically, residues 294–312 (NVVLYYAPEVFKTLGASTD) are periplasmic. Residues 313–333 (IALLQTIIVGVINLTFTVLAI) form a helical membrane-spanning segment. At 334-343 (MTVDKFGRKP) the chain is on the cytoplasmic side. Residues 344-364 (LQIIGALGMAIGMFSLGTAFY) traverse the membrane as a helical segment. The Periplasmic segment spans residues 365-369 (TQAPG). A helical membrane pass occupies residues 370-390 (IVALLSMLFYVAAFAMSWGPV). The Cytoplasmic segment spans residues 391–407 (CWVLLSEIFPNAIRGKA). Positions 392 and 415 each coordinate beta-D-xylose. The helical transmembrane segment at 408-428 (LAIAVAAQWLANYFVSWTFPM) threads the bilayer. Residues 429-442 (MDKNSWLVAHFHNG) are Periplasmic-facing. Residues 443-463 (FSYWIYGCMGVLAALFMWKFV) form a helical membrane-spanning segment. Residues 464-491 (PETKGKTLEELEALWEPETKKTQQTATL) lie on the Cytoplasmic side of the membrane.

The protein belongs to the major facilitator superfamily. Sugar transporter (TC 2.A.1.1) family.

The protein resides in the cell inner membrane. The catalysed reaction is D-xylose(in) + H(+)(in) = D-xylose(out) + H(+)(out). Functionally, uptake of D-xylose across the boundary membrane with the concomitant transport of protons into the cell (symport system). The protein is D-xylose-proton symporter (xylE) of Escherichia coli O157:H7.